A 190-amino-acid polypeptide reads, in one-letter code: Putative resolvase R771 (190 aa).

Positions 11-30 form a DNA-binding region, H-T-H motif; sequence SSVLGVHQRTLYQWDKKGWI. The Resolvase/invertase-type recombinase catalytic domain maps to 61 to 190; that stretch reads LSICYVRVSS…RNGLKKYSNK (130 aa). Residues 66–92 are a coiled coil; it reads VRVSSNNQKDDLERQIKFMKKKYPNHT. The active-site O-(5'-phospho-DNA)-serine intermediate is S69.

Belongs to the site-specific recombinase resolvase family.

Its function is as follows. Resolvase catalyzes the resolution (a site-specific recombination) of the cointegrated replicon to yield the final transposition products. This chain is Putative resolvase R771, found in Acanthamoeba polyphaga (Amoeba).